We begin with the raw amino-acid sequence, 282 residues long: NADPH-dependent 7-cyano-7-deazaguanine reductase (282 aa).

Substrate is bound at residue 88 to 90; it reads IES. 90–91 is a binding site for NADPH; that stretch reads SK. The active-site Thioimide intermediate is the cysteine 190. Aspartate 197 serves as the catalytic Proton donor. 229-230 is a substrate binding site; the sequence is HE. Residue 258-259 participates in NADPH binding; it reads RG.

The protein belongs to the GTP cyclohydrolase I family. QueF type 2 subfamily. As to quaternary structure, homodimer.

Its subcellular location is the cytoplasm. The enzyme catalyses 7-aminomethyl-7-carbaguanine + 2 NADP(+) = 7-cyano-7-deazaguanine + 2 NADPH + 3 H(+). Its pathway is tRNA modification; tRNA-queuosine biosynthesis. Catalyzes the NADPH-dependent reduction of 7-cyano-7-deazaguanine (preQ0) to 7-aminomethyl-7-deazaguanine (preQ1). This chain is NADPH-dependent 7-cyano-7-deazaguanine reductase, found in Escherichia coli O139:H28 (strain E24377A / ETEC).